The sequence spans 400 residues: Transposase for insertion sequence element ISRM3 (400 aa).

Belongs to the transposase mutator family.

In terms of biological role, required for the transposition of the insertion element. In Rhizobium meliloti (strain 1021) (Ensifer meliloti), this protein is Transposase for insertion sequence element ISRM3.